A 439-amino-acid chain; its full sequence is Ribosomal protein uS12 methylthiotransferase RimO (439 aa).

Positions K7–N119 constitute an MTTase N-terminal domain. Residues C16, C50, C82, C151, C155, and C158 each contribute to the [4Fe-4S] cluster site. In terms of domain architecture, Radical SAM core spans T137–K368.

This sequence belongs to the methylthiotransferase family. RimO subfamily. [4Fe-4S] cluster serves as cofactor.

The protein resides in the cytoplasm. It catalyses the reaction L-aspartate(89)-[ribosomal protein uS12]-hydrogen + (sulfur carrier)-SH + AH2 + 2 S-adenosyl-L-methionine = 3-methylsulfanyl-L-aspartate(89)-[ribosomal protein uS12]-hydrogen + (sulfur carrier)-H + 5'-deoxyadenosine + L-methionine + A + S-adenosyl-L-homocysteine + 2 H(+). Functionally, catalyzes the methylthiolation of an aspartic acid residue of ribosomal protein uS12. This chain is Ribosomal protein uS12 methylthiotransferase RimO, found in Helicobacter pylori (strain J99 / ATCC 700824) (Campylobacter pylori J99).